The primary structure comprises 471 residues: E3 ubiquitin-protein ligase TRIM38 (471 aa).

The RING-type zinc finger occupies C16–S62. Residues D90 to V131 form a B box-type zinc finger. 4 residues coordinate Zn(2+): C95, H98, C117, and H123. Positions C276 to Q471 constitute a B30.2/SPRY domain.

Interacts (via B30.2/SPRY domain) with TAB2 and TAB3.

Its subcellular location is the cytoplasm. It catalyses the reaction S-ubiquitinyl-[E2 ubiquitin-conjugating enzyme]-L-cysteine + [acceptor protein]-L-lysine = [E2 ubiquitin-conjugating enzyme]-L-cysteine + N(6)-ubiquitinyl-[acceptor protein]-L-lysine.. It participates in protein modification; protein ubiquitination. The protein operates within protein modification; protein sumoylation. In terms of biological role, E3 ubiquitin-protein and E3 SUMO-protein ligase that acts as a regulator of innate immunity. Acts as a negative regulator of type I interferon IFN-beta production by catalyzing 'Lys-48'-linked polyubiquitination of AZI2/NAP1, leading to its degradation. Mediates 'Lys-48'-linked polyubiquitination and proteasomal degradation of the critical TLR adapter TICAM1, inhibiting TLR3-mediated type I interferon signaling. Acts as a positive regulator of the cGAS-STING pathway by acting as a E3 SUMO-protein ligase: mediates sumoylation of CGAS and STING, preventing their degradation and thereby activating the innate immune response to DNA virus. Also acts as a negative regulator of NF-kappa-B signaling independently of its E3 protein ligase activity by promoting lysosome-dependent degradation of TAB2 and TAB3 adapters. This chain is E3 ubiquitin-protein ligase TRIM38, found in Mus musculus (Mouse).